The sequence spans 336 residues: Anthranilate phosphoribosyltransferase (336 aa).

Residues Gly-82, 85-86 (GD), Thr-90, 92-95 (NIST), 110-118 (KHGNRFASG), and Ser-122 each bind 5-phospho-alpha-D-ribose 1-diphosphate. Gly-82 provides a ligand contact to anthranilate. Residue Ser-94 coordinates Mg(2+). Anthranilate is bound at residue Asn-113. Arg-168 contacts anthranilate. Mg(2+) is bound by residues Asp-227 and Glu-228.

It belongs to the anthranilate phosphoribosyltransferase family. Homodimer. It depends on Mg(2+) as a cofactor.

It carries out the reaction N-(5-phospho-beta-D-ribosyl)anthranilate + diphosphate = 5-phospho-alpha-D-ribose 1-diphosphate + anthranilate. The protein operates within amino-acid biosynthesis; L-tryptophan biosynthesis; L-tryptophan from chorismate: step 2/5. Catalyzes the transfer of the phosphoribosyl group of 5-phosphorylribose-1-pyrophosphate (PRPP) to anthranilate to yield N-(5'-phosphoribosyl)-anthranilate (PRA). The polypeptide is Anthranilate phosphoribosyltransferase (Desulfitobacterium hafniense (strain DSM 10664 / DCB-2)).